The sequence spans 296 residues: MIKVYNRITNEYEEENVAGKKFIKWTYETPVGKSITELIAKRKIFSKFYGKFCDTKCSAKKIPDFVRDFNIDMNIAEKNISEFNSFNDFFVRNLTSTSRPIDYNEDIFISPGDGRITVYDNIDLDNIVQVKGLTYSLRELIKNDEISERYKDGICIILRLCPTDYHRFHFVDSGIPCETHKIKGHYYSVNPIALNSIPKLFCENKREWCIFKSENFGDVLTVEVGATCVGSIIQTYEPNKKAKKGDEKGYFKFGGSTTILFLEKDKVKIDDDILEQSKQGYECKVLLGETIGTKVL.

Residues Asp113, His169, and Ser256 each act as charge relay system; for autoendoproteolytic cleavage activity in the active site. The Schiff-base intermediate with substrate; via pyruvic acid; for decarboxylase activity role is filled by Ser256. Ser256 carries the pyruvic acid (Ser); by autocatalysis modification.

This sequence belongs to the phosphatidylserine decarboxylase family. PSD-B subfamily. Prokaryotic type II sub-subfamily. Heterodimer of a large membrane-associated beta subunit and a small pyruvoyl-containing alpha subunit. The cofactor is pyruvate. Post-translationally, is synthesized initially as an inactive proenzyme. Formation of the active enzyme involves a self-maturation process in which the active site pyruvoyl group is generated from an internal serine residue via an autocatalytic post-translational modification. Two non-identical subunits are generated from the proenzyme in this reaction, and the pyruvate is formed at the N-terminus of the alpha chain, which is derived from the carboxyl end of the proenzyme. The autoendoproteolytic cleavage occurs by a canonical serine protease mechanism, in which the side chain hydroxyl group of the serine supplies its oxygen atom to form the C-terminus of the beta chain, while the remainder of the serine residue undergoes an oxidative deamination to produce ammonia and the pyruvoyl prosthetic group on the alpha chain. During this reaction, the Ser that is part of the protease active site of the proenzyme becomes the pyruvoyl prosthetic group, which constitutes an essential element of the active site of the mature decarboxylase.

It localises to the cell membrane. It carries out the reaction a 1,2-diacyl-sn-glycero-3-phospho-L-serine + H(+) = a 1,2-diacyl-sn-glycero-3-phosphoethanolamine + CO2. The protein operates within phospholipid metabolism; phosphatidylethanolamine biosynthesis; phosphatidylethanolamine from CDP-diacylglycerol: step 2/2. In terms of biological role, catalyzes the formation of phosphatidylethanolamine (PtdEtn) from phosphatidylserine (PtdSer). This is Phosphatidylserine decarboxylase proenzyme from Clostridium botulinum (strain Eklund 17B / Type B).